The chain runs to 78 residues: Protein SlyX homolog (78 aa).

The protein belongs to the SlyX family.

The sequence is that of Protein SlyX homolog from Xanthomonas euvesicatoria pv. vesicatoria (strain 85-10) (Xanthomonas campestris pv. vesicatoria).